A 910-amino-acid polypeptide reads, in one-letter code: DNA mismatch repair protein MutS (910 aa).

Glycine 615–serine 622 contributes to the ATP binding site.

It belongs to the DNA mismatch repair MutS family.

In terms of biological role, this protein is involved in the repair of mismatches in DNA. It is possible that it carries out the mismatch recognition step. This protein has a weak ATPase activity. The chain is DNA mismatch repair protein MutS from Clostridium perfringens (strain ATCC 13124 / DSM 756 / JCM 1290 / NCIMB 6125 / NCTC 8237 / Type A).